The sequence spans 398 residues: 1-deoxy-D-xylulose 5-phosphate reductoisomerase (398 aa).

T10, G11, S12, I13, K37, N38, and N124 together coordinate NADPH. A 1-deoxy-D-xylulose 5-phosphate-binding site is contributed by K125. E126 provides a ligand contact to NADPH. D150 lines the Mn(2+) pocket. Positions 151, 152, 186, and 209 each coordinate 1-deoxy-D-xylulose 5-phosphate. E152 contributes to the Mn(2+) binding site. G215 serves as a coordination point for NADPH. Residues S222, N227, K228, and E231 each contribute to the 1-deoxy-D-xylulose 5-phosphate site. E231 provides a ligand contact to Mn(2+).

This sequence belongs to the DXR family. As to quaternary structure, homodimer. It depends on Mg(2+) as a cofactor. Requires Mn(2+) as cofactor.

The enzyme catalyses 2-C-methyl-D-erythritol 4-phosphate + NADP(+) = 1-deoxy-D-xylulose 5-phosphate + NADPH + H(+). It participates in isoprenoid biosynthesis; isopentenyl diphosphate biosynthesis via DXP pathway; isopentenyl diphosphate from 1-deoxy-D-xylulose 5-phosphate: step 1/6. Functionally, catalyzes the NADPH-dependent rearrangement and reduction of 1-deoxy-D-xylulose-5-phosphate (DXP) to 2-C-methyl-D-erythritol 4-phosphate (MEP). This is 1-deoxy-D-xylulose 5-phosphate reductoisomerase from Buchnera aphidicola subsp. Schizaphis graminum (strain Sg).